The following is a 594-amino-acid chain: uncharacterized protein (594 aa).

In terms of biological role, the presence of the two linear plasmids, termed pGKL1 and pGKL2, in strains of Kluyveromyces lactis confers the killer phenotype to the host cell, by promoting the secretion of a toxin able to inhibit the growth of sensitive strains. This is an uncharacterized protein from Kluyveromyces lactis (strain ATCC 8585 / CBS 2359 / DSM 70799 / NBRC 1267 / NRRL Y-1140 / WM37) (Yeast).